Reading from the N-terminus, the 270-residue chain is Putative pyruvate, phosphate dikinase regulatory protein (270 aa).

ADP is bound at residue 151–158; sequence GVSRTSKT.

It belongs to the pyruvate, phosphate/water dikinase regulatory protein family. PDRP subfamily.

The enzyme catalyses N(tele)-phospho-L-histidyl/L-threonyl-[pyruvate, phosphate dikinase] + ADP = N(tele)-phospho-L-histidyl/O-phospho-L-threonyl-[pyruvate, phosphate dikinase] + AMP + H(+). It carries out the reaction N(tele)-phospho-L-histidyl/O-phospho-L-threonyl-[pyruvate, phosphate dikinase] + phosphate + H(+) = N(tele)-phospho-L-histidyl/L-threonyl-[pyruvate, phosphate dikinase] + diphosphate. Functionally, bifunctional serine/threonine kinase and phosphorylase involved in the regulation of the pyruvate, phosphate dikinase (PPDK) by catalyzing its phosphorylation/dephosphorylation. This is Putative pyruvate, phosphate dikinase regulatory protein from Bacillus velezensis (strain DSM 23117 / BGSC 10A6 / LMG 26770 / FZB42) (Bacillus amyloliquefaciens subsp. plantarum).